Consider the following 190-residue polypeptide: Pancreatic IgW, short secretory form (190 aa).

An Ig-like C1-type domain is found at 53–145; that stretch reads PNITALVPSV…PPSNFRSMIS (93 aa). N-linked (GlcNAc...) asparagine glycosylation is present at asparagine 54. Cysteine 74 and cysteine 131 form a disulfide bridge. Residue asparagine 179 is glycosylated (N-linked (GlcNAc...) asparagine).

As to expression, expressed in pancreas, spleen, epigonal organ and at low levels in several other tissues.

Its subcellular location is the secreted. This chain is Pancreatic IgW, short secretory form, found in Ginglymostoma cirratum (Nurse shark).